An 845-amino-acid chain; its full sequence is Probable inorganic carbon transporter subunit DabA (845 aa).

The tract at residues Met-1–Ser-20 is disordered. Residues Cys-345, Asp-347, His-516, and Cys-531 each coordinate Zn(2+).

It belongs to the inorganic carbon transporter (TC 9.A.2) DabA family. Forms a complex with DabB. Zn(2+) serves as cofactor.

It localises to the cell inner membrane. Functionally, part of an energy-coupled inorganic carbon pump. The sequence is that of Probable inorganic carbon transporter subunit DabA from Azotobacter vinelandii (strain DJ / ATCC BAA-1303).